A 381-amino-acid polypeptide reads, in one-letter code: 1-deoxy-D-xylulose 5-phosphate reductoisomerase (381 aa).

NADPH-binding residues include Ser10, Gly11, Ser12, Ile13, Gly36, Lys37, Asn38, and Asn121. Residue Lys122 participates in 1-deoxy-D-xylulose 5-phosphate binding. Position 123 (Glu123) interacts with NADPH. Residue Asp147 coordinates Mn(2+). 1-deoxy-D-xylulose 5-phosphate contacts are provided by Ser148, Glu149, Ser173, and His196. A Mn(2+)-binding site is contributed by Glu149. Gly202 lines the NADPH pocket. 1-deoxy-D-xylulose 5-phosphate-binding residues include Ser209, Asn214, Lys215, and Glu218. Glu218 provides a ligand contact to Mn(2+).

Belongs to the DXR family. Mg(2+) is required as a cofactor. Mn(2+) serves as cofactor.

The enzyme catalyses 2-C-methyl-D-erythritol 4-phosphate + NADP(+) = 1-deoxy-D-xylulose 5-phosphate + NADPH + H(+). The protein operates within isoprenoid biosynthesis; isopentenyl diphosphate biosynthesis via DXP pathway; isopentenyl diphosphate from 1-deoxy-D-xylulose 5-phosphate: step 1/6. Functionally, catalyzes the NADPH-dependent rearrangement and reduction of 1-deoxy-D-xylulose-5-phosphate (DXP) to 2-C-methyl-D-erythritol 4-phosphate (MEP). This Geobacillus sp. (strain WCH70) protein is 1-deoxy-D-xylulose 5-phosphate reductoisomerase.